Here is an 896-residue protein sequence, read N- to C-terminus: DNA double-strand break repair Rad50 ATPase (896 aa).

Residues asparagine 32 to serine 38 and glutamine 137 each bind ATP. Coiled-coil stretches lie at residues arginine 200–glutamate 274, glutamate 412–methionine 505, isoleucine 580–phenylalanine 611, isoleucine 636–arginine 669, and arginine 702–lysine 731. The 97-residue stretch at tyrosine 411 to serine 507 folds into the Zinc-hook domain. Cysteine 455 and cysteine 458 together coordinate Zn(2+).

Belongs to the SMC family. RAD50 subfamily. In terms of assembly, homodimer. Forms a heterotetramer composed of two Mre11 subunits and two Rad50 subunits. It depends on Zn(2+) as a cofactor.

Its function is as follows. Part of the Rad50/Mre11 complex, which is involved in the early steps of DNA double-strand break (DSB) repair. The complex may facilitate opening of the processed DNA ends to aid in the recruitment of HerA and NurA. Rad50 controls the balance between DNA end bridging and DNA resection via ATP-dependent structural rearrangements of the Rad50/Mre11 complex. This is DNA double-strand break repair Rad50 ATPase from Thermoplasma acidophilum (strain ATCC 25905 / DSM 1728 / JCM 9062 / NBRC 15155 / AMRC-C165).